Reading from the N-terminus, the 282-residue chain is Protein-glutamine deamidase Cif (282 aa).

The segment at 1–16 (MKDITLPPPTSASCLT) is translocation domain (TD). Active-site residues include cysteine 109, histidine 165, and glutamine 185.

It belongs to the Cif family.

The protein localises to the secreted. It is found in the host nucleus. The enzyme catalyses L-glutaminyl-[protein] + H2O = L-glutamyl-[protein] + NH4(+). Protein-glutamine deamidase effector that inhibits the host cell cycle and other key cellular processes such as the actin network and programmed-cell death. Acts by mediating the side chain deamidation of 'Gln-40' of host NEDD8, converting it to glutamate, thereby abolishing the activity of cullin-RING-based E3 ubiquitin-protein ligase complexes (CRL complexes). Inactivation of CRL complexes prevents ubiquitination and subsequent degradation of the cyclin-dependent kinase inhibitors CDKN1A/p21 and CDKN1B/p27, leading to G1 and G2 cell cycle arrests in host cells. Also able to catalyze deamidation of 'Gln-40' of host ubiquitin in vitro; however, NEDD8 constitutes the preferred substrate in vivo. The sequence is that of Protein-glutamine deamidase Cif from Escherichia coli.